The primary structure comprises 480 residues: Putative auxin transporter-like protein 4 (480 aa).

The Cytoplasmic portion of the chain corresponds to 1-66; it reads MASEKVETIV…DAWFSCASNQ (66 aa). The chain crosses the membrane as a helical span at residues 67–84; that stretch reads VAQVLLTLPYSFSQLGMA. The Extracellular segment spans residues 85 to 86; sequence SG. A helical membrane pass occupies residues 87–107; sequence VAFQVFYGLMGSWTAYLISVL. At 108–143 the chain is on the cytoplasmic side; the sequence is YVEYRTRRERDKVDFRNHVIQWFEVLDGLLGRHWRN. The chain crosses the membrane as a helical span at residues 144–164; the sequence is AGLLFNCTFLLFGSVIQLIAC. Over 165–179 the chain is Extracellular; it reads ASNIYYINDRLDKRT. The chain crosses the membrane as a helical span at residues 180 to 200; the sequence is WTYIFGACCATTVFVPSFHNY. Over 201-203 the chain is Cytoplasmic; it reads RVW. Residues 204-224 traverse the membrane as a helical segment; sequence SFLGLLMTSYTAWYLTVAAVV. The Extracellular portion of the chain corresponds to 225–241; sequence HGKVDGAAPRAGPSKTM. The helical transmembrane segment at 242–262 threads the bilayer; the sequence is VLYFTGATNILYTFGGHAVTV. Over 263–275 the chain is Cytoplasmic; that stretch reads EIMHAMWRPRRFK. The helical transmembrane segment at 276 to 296 threads the bilayer; it reads MIYLAATAYVLTLTLPSAAAM. Residues 297 to 323 lie on the Extracellular side of the membrane; that stretch reads YWAFGDALLDHSNAFALLPRTPWRDAA. The chain crosses the membrane as a helical span at residues 324 to 344; sequence VVLMLIHQFITFGFACTPLYF. At 345-365 the chain is on the cytoplasmic side; that stretch reads VWEKAIGVHGGAGVLRRAAAR. Residues 366-386 traverse the membrane as a helical segment; that stretch reads LPVVLPIWFLAVIFPFFGPIN. S387 is a topological domain (extracellular). Residues 388-408 traverse the membrane as a helical segment; sequence TVGSFLVSFTVYIIPAMAHMA. The Cytoplasmic portion of the chain corresponds to 409-433; that stretch reads TFAPAAARENAVEPPPRALGGWPGT. A helical membrane pass occupies residues 434–454; that stretch reads FAANCFVVAWVLVVGFGFGGW. Over 455-480 the chain is Extracellular; it reads ASTVNFVRQVDTFGLFTKCYQCPPRH.

This sequence belongs to the amino acid/polyamine transporter 2 family. Amino acid/auxin permease (AAAP) (TC 2.A.18.1) subfamily.

The protein localises to the cell membrane. In terms of biological role, carrier protein involved in proton-driven auxin influx. May mediate the formation of auxin gradient from developing leaves (site of auxin biosynthesis) to tips. In Oryza sativa subsp. japonica (Rice), this protein is Putative auxin transporter-like protein 4.